Here is a 448-residue protein sequence, read N- to C-terminus: MTKVITRFAPSPTGMLHVGNIRVALLNWLYAKKHNGKFILRFDDTDLERSKQKYKNDIERDLKFLNINCDQIFNQLSRVSRYNEIKNLLINKKRLYACYETTEELELKRKFRLSKGLPPIYDRASLNLTEKQIQKYIEQGRKPHYRFFLNDEPISWYDMIKGDIKYNGKALSDPIVIRADGSMTYMLCSVIDDIDYDITHIIRGEDHVSNTAIQIQMFEALNKIPPVFAHLSLIINKEEKISKRVGGFEIAYLKNEVGLEAMTITSFFSLLGSSLHIFPYKSIEKLVAQFEISSFSKSPTIYQQYDLERLNHKLLISLDYHEVKERLKEINADYIDENFWLSVRANLQKLSDIKDWWDICYQTPKIGNLNLDKEYLKQASELLPLGKITKDSWSIWTKEITNATGRKGKELFLPIRLALTGRKSGPEIAGILPLLKREEIIKRLVAIT.

The short motif at 10–20 is the 'HIGH' region element; that stretch reads PSPTGMLHVGN. The 'KMSKS' region motif lies at 240–244; that stretch reads KISKR. Lys243 lines the ATP pocket.

This sequence belongs to the class-I aminoacyl-tRNA synthetase family. Glutamate--tRNA ligase type 1 subfamily. Monomer.

It localises to the cytoplasm. The catalysed reaction is tRNA(Glu) + L-glutamate + ATP = L-glutamyl-tRNA(Glu) + AMP + diphosphate. Catalyzes the attachment of glutamate to tRNA(Glu) in a two-step reaction: glutamate is first activated by ATP to form Glu-AMP and then transferred to the acceptor end of tRNA(Glu). The sequence is that of Glutamate--tRNA ligase 1 from Rickettsia typhi (strain ATCC VR-144 / Wilmington).